Here is a 265-residue protein sequence, read N- to C-terminus: Type III pantothenate kinase (265 aa).

Aspartate 6–valine 13 serves as a coordination point for ATP. Residues tyrosine 100 and glycine 107–arginine 110 each bind substrate. The active-site Proton acceptor is aspartate 109. Aspartate 129 is a K(+) binding site. Threonine 132 contacts ATP. Threonine 184 contacts substrate.

The protein belongs to the type III pantothenate kinase family. As to quaternary structure, homodimer. It depends on NH4(+) as a cofactor. The cofactor is K(+).

It is found in the cytoplasm. It catalyses the reaction (R)-pantothenate + ATP = (R)-4'-phosphopantothenate + ADP + H(+). The protein operates within cofactor biosynthesis; coenzyme A biosynthesis; CoA from (R)-pantothenate: step 1/5. Catalyzes the phosphorylation of pantothenate (Pan), the first step in CoA biosynthesis. The polypeptide is Type III pantothenate kinase (Alkaliphilus oremlandii (strain OhILAs) (Clostridium oremlandii (strain OhILAs))).